The following is a 487-amino-acid chain: Recombining binding protein suppressor of hairless (487 aa).

2 DNA-binding regions span residues 44–54 (QKSYGNEKRFF) and 152–157 (SKPSKK). Lys162 carries the post-translational modification N6-acetyllysine. The segment at 179–184 (RLRSQT) is DNA-binding. The region spanning 342-432 (PVVESLQLNG…YSTSLTFTYT (91 aa)) is the IPT/TIG domain. The segment covering 452-468 (SSQVPPNESNTNSEGSY) has biased composition (polar residues). The tract at residues 452 to 487 (SSQVPPNESNTNSEGSYTNVSTNSTSVTSSTATVVS) is disordered. Residues 469-487 (TNVSTNSTSVTSSTATVVS) show a composition bias toward low complexity.

It belongs to the Su(H) family. Interacts with activated NOTCH1, NOTCH2 or NOTCH3. Interacts with MINT/SHARP. This interaction may mediate the recruitment of large corepressor complexes containing proteins such as HDAC1, HDAC2, NCOR2, SAP30, FHL1/KYOT2 and CIR1. Interacts with EP300, MAML1 and PTF1A. Interacts with RITA1, leading to nuclear export, prevent the interaction between RBPJ and NICD product and subsequent down-regulation of the Notch signaling pathway. Interacts with SNW1. Interacts with CHCHD2 and CXXC5. Interacts with BEND6 (via BEN domain). Interacts with NKAPL. Interacts with ZMIZ1. Interacts with RBM15. Interacts with L3MBTL3 and KDM1A; the interaction with KDM1A is weaker in the absence of L3MBTL3 and the interaction with L3MBTL3 is impaired by Notch-derived peptides containing the intracellular domain (NICD).

Its subcellular location is the nucleus. The protein localises to the cytoplasm. Functionally, transcriptional regulator that plays a central role in Notch signaling, a signaling pathway involved in cell-cell communication that regulates a broad spectrum of cell-fate determinations. Acts as a transcriptional repressor when it is not associated with Notch proteins. When associated with some NICD product of Notch proteins (Notch intracellular domain), it acts as a transcriptional activator that activates transcription of Notch target genes. Probably represses or activates transcription via the recruitment of chromatin remodeling complexes containing histone deacetylase or histone acetylase proteins, respectively. Specifically binds to the immunoglobulin kappa-type J segment recombination signal sequence. Binds specifically to methylated DNA. Binds to the oxygen responsive element of COX4I2 and activates its transcription under hypoxia conditions (4% oxygen). Negatively regulates the phagocyte oxidative burst in response to bacterial infection by repressing transcription of NADPH oxidase subunits. This chain is Recombining binding protein suppressor of hairless (RBPJ), found in Bos taurus (Bovine).